A 139-amino-acid polypeptide reads, in one-letter code: MEKTFLMVKPDGVKRGLIGEIISRFENKGYTLNRLEMVTPSVEVAEAHYAEHKEKPFFGELVEFLTSGPVVAMEWEGEDIVAVSRLMIGKTKPVDAQPGTIRGDFASTMSQNVIHGSDSVDSAERELSLWFAEVASHVS.

Residues Lys-9, Phe-57, Arg-85, Thr-91, Arg-102, and Asn-112 each contribute to the ATP site. The active-site Pros-phosphohistidine intermediate is His-115.

This sequence belongs to the NDK family. As to quaternary structure, homotetramer. The cofactor is Mg(2+).

Its subcellular location is the cytoplasm. It carries out the reaction a 2'-deoxyribonucleoside 5'-diphosphate + ATP = a 2'-deoxyribonucleoside 5'-triphosphate + ADP. It catalyses the reaction a ribonucleoside 5'-diphosphate + ATP = a ribonucleoside 5'-triphosphate + ADP. Major role in the synthesis of nucleoside triphosphates other than ATP. The ATP gamma phosphate is transferred to the NDP beta phosphate via a ping-pong mechanism, using a phosphorylated active-site intermediate. This Exiguobacterium sp. (strain ATCC BAA-1283 / AT1b) protein is Nucleoside diphosphate kinase.